The primary structure comprises 328 residues: GMP reductase (328 aa).

The active-site Thioimidate intermediate is the cysteine 177. Residue 206-229 (IVADGGIRYNGDIAKSIRFGASMV) coordinates NADP(+).

This sequence belongs to the IMPDH/GMPR family. GuaC type 2 subfamily.

The catalysed reaction is IMP + NH4(+) + NADP(+) = GMP + NADPH + 2 H(+). Functionally, catalyzes the irreversible NADPH-dependent deamination of GMP to IMP. It functions in the conversion of nucleobase, nucleoside and nucleotide derivatives of G to A nucleotides, and in maintaining the intracellular balance of A and G nucleotides. The polypeptide is GMP reductase (Levilactobacillus brevis (strain ATCC 367 / BCRC 12310 / CIP 105137 / JCM 1170 / LMG 11437 / NCIMB 947 / NCTC 947) (Lactobacillus brevis)).